A 412-amino-acid polypeptide reads, in one-letter code: Cathepsin D (412 aa).

The signal sequence occupies residues Met1–Ala20. The propeptide at Leu21–Glu64 is activation peptide. The O-linked (GalNAc...) threonine glycan is linked to Thr63. Residues Tyr79–Ala407 form the Peptidase A1 domain. 2 disulfides stabilise this stretch: Cys91-Cys160 and Cys110-Cys117. Asp97 is a catalytic residue. N-linked (GlcNAc...) asparagine glycans are attached at residues Asn134 and Asn263. Cys286 and Cys290 are disulfide-bonded. Asp295 is a catalytic residue. An intrachain disulfide couples Cys329 to Cys366.

This sequence belongs to the peptidase A1 family. As to quaternary structure, consists of a light chain and a heavy chain. Interacts with ADAM30; this leads to activation of CTSD. Interacts with GRN; stabilizes CTSD; increases its proteolytic activity. Post-translationally, N- and O-glycosylated. Undergoes proteolytic cleavage and activation by ADAM30. In terms of processing, as well as the major heavy chain which starts at Leu-169, 2 minor forms starting at Gly-170 and Gly-171 have been identified. An additional form starting at Ala-168 has also been identified. Expressed in the aorta extracellular space (at protein level). Expressed in liver (at protein level).

The protein localises to the lysosome. It localises to the melanosome. Its subcellular location is the secreted. The protein resides in the extracellular space. It carries out the reaction Specificity similar to, but narrower than, that of pepsin A. Does not cleave the 4-Gln-|-His-5 bond in B chain of insulin.. Acid protease active in intracellular protein breakdown. Plays a role in APP processing following cleavage and activation by ADAM30 which leads to APP degradation. Involved in the pathogenesis of several diseases such as breast cancer and possibly Alzheimer disease. The polypeptide is Cathepsin D (CTSD) (Homo sapiens (Human)).